The primary structure comprises 617 residues: Mitochondrial Rho GTPase 2 (617 aa).

The Cytoplasmic segment spans residues 1–590; that stretch reads MKRDVRILLL…LNGSDMSSTS (590 aa). In terms of domain architecture, Miro 1 spans 2 to 168; the sequence is KRDVRILLLG…FYYAQKAVLH (167 aa). GTP contacts are provided by Gly-16, Lys-17, Thr-18, and Ser-19. A Mg(2+)-binding site is contributed by Thr-18. Asp-57 is a binding site for Mg(2+). Residues Ser-59, Asn-118, Lys-119, Asp-121, Ala-149, and Lys-150 each contribute to the GTP site. EF-hand domains are found at residues 184–219 and 304–339; these read QCVR…CFGN and LGHQ…LPYM. Asp-197, Asp-199, Asp-201, Glu-208, Asp-317, Asp-319, Asp-321, and Glu-328 together coordinate Ca(2+). The Miro 2 domain occupies 416–578; sequence RTVFLCKVIG…YSKLTWAAMY (163 aa). GTP-binding residues include Gly-428, Gly-430, Lys-431, and Thr-432. Positions 432 and 474 each coordinate Mg(2+). The GTP site is built by Lys-528 and Asp-530. Residues 591–613 traverse the membrane as a helical; Anchor for type IV membrane protein segment; it reads FWLRVTLGATIAAMLGFALYRAF. Residues 614-617 are Mitochondrial intermembrane-facing; it reads SRHK.

Belongs to the mitochondrial Rho GTPase family. In terms of assembly, homodimer.

Its subcellular location is the mitochondrion outer membrane. It catalyses the reaction GTP + H2O = GDP + phosphate + H(+). The catalysed reaction is ATP + H2O = ADP + phosphate + H(+). The enzyme catalyses UTP + H2O = UDP + phosphate + H(+). Its function is as follows. Atypical mitochondrial nucleoside-triphosphatase (NTPase) involved in mitochondrial trafficking. Probably involved in control of anterograde transport of mitochondria and their subcellular distribution. Can hydrolyze GTP, ATP and UTP. The sequence is that of Mitochondrial Rho GTPase 2 (rhot2) from Danio rerio (Zebrafish).